The following is a 202-amino-acid chain: Dephospho-CoA kinase (202 aa).

Residues 6–202 (KISVTGDPSS…QCFKALKGTI (197 aa)) form the DPCK domain. Residue 14–19 (SSGKTE) coordinates ATP.

Belongs to the CoaE family.

Its subcellular location is the cytoplasm. It catalyses the reaction 3'-dephospho-CoA + ATP = ADP + CoA + H(+). The protein operates within cofactor biosynthesis; coenzyme A biosynthesis; CoA from (R)-pantothenate: step 5/5. Its function is as follows. Catalyzes the phosphorylation of the 3'-hydroxyl group of dephosphocoenzyme A to form coenzyme A. This is Dephospho-CoA kinase from Chlamydia trachomatis serovar A (strain ATCC VR-571B / DSM 19440 / HAR-13).